Consider the following 264-residue polypeptide: Hydroxyethylthiazole kinase (264 aa).

Position 40 (Met40) interacts with substrate. Residues Lys116 and Thr161 each coordinate ATP. Position 188 (Gly188) interacts with substrate.

Belongs to the Thz kinase family. Mg(2+) serves as cofactor.

The catalysed reaction is 5-(2-hydroxyethyl)-4-methylthiazole + ATP = 4-methyl-5-(2-phosphooxyethyl)-thiazole + ADP + H(+). The protein operates within cofactor biosynthesis; thiamine diphosphate biosynthesis; 4-methyl-5-(2-phosphoethyl)-thiazole from 5-(2-hydroxyethyl)-4-methylthiazole: step 1/1. In terms of biological role, catalyzes the phosphorylation of the hydroxyl group of 4-methyl-5-beta-hydroxyethylthiazole (THZ). The sequence is that of Hydroxyethylthiazole kinase from Staphylococcus carnosus (strain TM300).